Consider the following 319-residue polypeptide: Malate dehydrogenase (319 aa).

NAD(+) contacts are provided by residues 10–15 (GAGQIG) and Asp34. Substrate-binding residues include Arg85 and Arg91. NAD(+)-binding positions include Asn98 and 121–123 (ITN). Substrate-binding residues include Asn123 and Arg154. His178 (proton acceptor) is an active-site residue.

It belongs to the LDH/MDH superfamily. MDH type 3 family.

The enzyme catalyses (S)-malate + NAD(+) = oxaloacetate + NADH + H(+). Functionally, catalyzes the reversible oxidation of malate to oxaloacetate. This is Malate dehydrogenase from Rhodospirillum centenum (strain ATCC 51521 / SW).